A 292-amino-acid chain; its full sequence is tRNA pseudouridine synthase B (292 aa).

The active-site Nucleophile is the Asp-38.

The protein belongs to the pseudouridine synthase TruB family. Type 1 subfamily.

It catalyses the reaction uridine(55) in tRNA = pseudouridine(55) in tRNA. In terms of biological role, responsible for synthesis of pseudouridine from uracil-55 in the psi GC loop of transfer RNAs. In Streptococcus gordonii (strain Challis / ATCC 35105 / BCRC 15272 / CH1 / DL1 / V288), this protein is tRNA pseudouridine synthase B.